A 1204-amino-acid chain; its full sequence is Cingulin (1204 aa).

The head stretch occupies residues 7-359; that stretch reads MAEPRGPVDH…VMMSSGSSKA (353 aa). Residues 25–48 form a disordered region; it reads EPVSGAEMGTLRRGGRRPAKDARA. The short motif at 48–62 is the ZIM element; it reads ASTYGVAVRVQGIAG. Positions 54 to 67 are interaction with TJP1/ZO1; that stretch reads AVRVQGIAGQPFVV. The disordered stretch occupies residues 68 to 269; that stretch reads LNSGEKGGDS…SPLSGLSRAR (202 aa). 8 positions are modified to phosphoserine: Ser95, Ser96, Ser98, Ser135, Ser137, Ser140, Ser155, and Ser165. A compositionally biased stretch (polar residues) spans 126–140; it reads TQWNGKLLRSQSQAS. Positions 166–190 are enriched in polar residues; sequence PGSTIDTAPLSSVDSLINKFDSQLR. Over residues 207 to 231 the composition is skewed to basic and acidic residues; sequence EQRKRSKSLDSRLPRDTLEERERQS. A phosphoserine mark is found at Ser214, Ser217, Ser260, Ser278, Ser340, and Ser353. Residues 360 to 1161 are a coiled coil; the sequence is VAGQGELTRK…SLEKDSWRKA (802 aa). The residue at position 581 (Lys581) is an N6-acetyllysine. Residues 1156-1182 form a disordered region; that stretch reads DSWRKASRSAAESTLKHEGLSSDEEFD. Positions 1162 to 1204 are tail; the sequence is SRSAAESTLKHEGLSSDEEFDGVYDPSSIASLLTESNLQTSSC. Phosphoserine occurs at positions 1176 and 1177.

It belongs to the cingulin family. As to quaternary structure, homodimer. Interacts with TJP1/ZO1 and SPEF1.

It localises to the cell junction. It is found in the tight junction. Its function is as follows. Probably plays a role in the formation and regulation of the tight junction (TJ) paracellular permeability barrier. In Callithrix jacchus (White-tufted-ear marmoset), this protein is Cingulin.